The chain runs to 299 residues: MSVTVRVPAKVNVQLAVGAARPDGFHDLANVFLAVSLYDEVTATPAADGLRVTCEGPDAGQVPLDRTNLAARAAEALAARYGRAPDVHLHIAKDIPVAGGMAGGSADGAGALLACDALWGTGASREELLEICAGLGSDVPFSLVGGAALGTGRGERLAELEVGGDFHWVFALAARGLSTPAVFREFDRLGEGLDLPEPVADQAVLDALAKGDAAALAVAVTNDLQPAALSLFPELSDTLAAGRAAGALAALVSGSGPTTAFLATDARSASDIAGVLRASGTCRDVRTAVGAAAGATVLD.

K10 is an active-site residue. 96–106 contributes to the ATP binding site; the sequence is PVAGGMAGGSA. Residue D138 is part of the active site.

It belongs to the GHMP kinase family. IspE subfamily.

The enzyme catalyses 4-CDP-2-C-methyl-D-erythritol + ATP = 4-CDP-2-C-methyl-D-erythritol 2-phosphate + ADP + H(+). It participates in isoprenoid biosynthesis; isopentenyl diphosphate biosynthesis via DXP pathway; isopentenyl diphosphate from 1-deoxy-D-xylulose 5-phosphate: step 3/6. Catalyzes the phosphorylation of the position 2 hydroxy group of 4-diphosphocytidyl-2C-methyl-D-erythritol. The protein is 4-diphosphocytidyl-2-C-methyl-D-erythritol kinase of Streptomyces coelicolor (strain ATCC BAA-471 / A3(2) / M145).